Reading from the N-terminus, the 402-residue chain is Large ribosomal subunit protein uL3 (402 aa).

Positions 1-35 are disordered; sequence MSHRKFSAPRHGSMGFTPKKRSKRHRGKVKAFPKD. Residues 18-31 show a composition bias toward basic residues; it reads PKKRSKRHRGKVKA.

The protein belongs to the universal ribosomal protein uL3 family.

The protein localises to the cytoplasm. The L3 protein is a component of the large subunit of cytoplasmic ribosomes. This chain is Large ribosomal subunit protein uL3 (RPL3), found in Toxocara canis (Canine roundworm).